Consider the following 201-residue polypeptide: MPIGVPKVPFRLPGEPSAQWVDLYNRLYRERVLFLCQELDDELANQLIGIMLYLNAEEQNKGLYIYINSPGGSVTCGIAVYDAMNYIKSEVTTICVGTAASMASFILAGGDRGKRIALPHSRIMVHQPEGGSQGQASEVLSESQEVMRIRRQVGRIYSERTGQTLSRVSRDMDRDQFLSAREAKEYGLVDQVAVDTKWSTN.

Serine 101 serves as the catalytic Nucleophile. The active site involves histidine 126.

The protein belongs to the peptidase S14 family. Component of the chloroplastic Clp protease core complex.

The protein resides in the plastid. It is found in the chloroplast stroma. The enzyme catalyses Hydrolysis of proteins to small peptides in the presence of ATP and magnesium. alpha-casein is the usual test substrate. In the absence of ATP, only oligopeptides shorter than five residues are hydrolyzed (such as succinyl-Leu-Tyr-|-NHMec, and Leu-Tyr-Leu-|-Tyr-Trp, in which cleavage of the -Tyr-|-Leu- and -Tyr-|-Trp bonds also occurs).. In terms of biological role, cleaves peptides in various proteins in a process that requires ATP hydrolysis. Has a chymotrypsin-like activity. Plays a major role in the degradation of misfolded proteins. In Chlorella vulgaris (Green alga), this protein is ATP-dependent Clp protease proteolytic subunit.